Here is a 229-residue protein sequence, read N- to C-terminus: Lytic polysaccharide monooxygenase-like protein ham-7 (229 aa).

Residues 1 to 17 (MLTSTLLALASAALASA) form the signal peptide. Residue histidine 18 coordinates Cu(2+). Disulfide bonds link cysteine 47–cysteine 157 and cysteine 122–cysteine 178. Asparagine 55, asparagine 98, asparagine 139, asparagine 174, and asparagine 180 each carry an N-linked (GlcNAc...) asparagine glycan. Serine 206 is lipidated: GPI-anchor amidated serine. The propeptide at 207-229 (AAASLARMAGWVPLVAGGLWLML) is removed in mature form.

Belongs to the X325 family. It depends on Cu(2+) as a cofactor.

The protein localises to the cell membrane. In terms of biological role, lytic polysaccharide monooxygenase-like protein that has diverged to biological functions other than polysaccharide degradation since it does not perform oxidative cleavage of polysaccharides. Acts as the major cell wall sensor that regulates MAK-1-dependent hyphal anastomosis, the fusion of hyphal cells. May also act as a cell surface-bound protein that functions in the copper-accumulation pathway. The sequence is that of Lytic polysaccharide monooxygenase-like protein ham-7 from Neurospora crassa (strain ATCC 24698 / 74-OR23-1A / CBS 708.71 / DSM 1257 / FGSC 987).